A 144-amino-acid chain; its full sequence is tRNA-specific adenosine deaminase (144 aa).

A CMP/dCMP-type deaminase domain is found at Met1 to Val116. His48 contacts Zn(2+). Glu50 (proton donor) is an active-site residue. Zn(2+) is bound by residues Cys78 and Cys81.

It belongs to the cytidine and deoxycytidylate deaminase family. Homodimer. The cofactor is Zn(2+).

The enzyme catalyses adenosine(34) in tRNA + H2O + H(+) = inosine(34) in tRNA + NH4(+). In terms of biological role, catalyzes the deamination of adenosine to inosine at the wobble position 34 of tRNA(Arg2). The sequence is that of tRNA-specific adenosine deaminase from Rickettsia felis (strain ATCC VR-1525 / URRWXCal2) (Rickettsia azadi).